A 115-amino-acid polypeptide reads, in one-letter code: MANYRSTIRHRNSGSRKSVSGDTHEVTRVRTPQKDRNEVLATVLNLLGSKRVTLQCMDGVVRMGRIPGSKKKRMWIREGDIVIANPWEIQDSKADVTWKYTRPQVEWLERKGYLN.

A disordered region spans residues Met1–Lys34. Over residues Asp22–Lys34 the composition is skewed to basic and acidic residues. The 75-residue stretch at Thr27–Thr101 folds into the S1-like domain.

Belongs to the eIF-1A family.

Its function is as follows. Seems to be required for maximal rate of protein biosynthesis. Enhances ribosome dissociation into subunits and stabilizes the binding of the initiator Met-tRNA(I) to 40 S ribosomal subunits. The chain is Translation initiation factor 1A 2 from Methanosarcina barkeri (strain Fusaro / DSM 804).